A 108-amino-acid polypeptide reads, in one-letter code: Competence protein ComGC (108 aa).

A signal peptide spans 1–13 (MKKMMTFLKKAKV). Residues 14-39 (KAFTLVEMLVVLLIISVLFLLFVPNL) are may be involved in polymerization of ComGC. The residue at position 16 (Phe16) is an N-methylphenylalanine. A helical transmembrane segment spans residues 16–36 (FTLVEMLVVLLIISVLFLLFV).

This sequence belongs to the ComGC family. The transformation pili are flexible filaments, consisting mainly of the major pilin ComGC and smaller amounts of the minor pilins, including at least ComGD, ComGF and ComGG, and perhaps ComGE. Homodimer. Forms higher-order multimers. Interacts with ComGG; the interaction is probably direct. In terms of processing, undergoes proteolytic cleavage.

Its subcellular location is the cell membrane. It is found in the cell surface. It localises to the fimbrium. The protein localises to the secreted. Major component of the type IV-like pilus (T4P) that plays a role in transformation. Transformation pili are dynamically extended and retracted, perhaps thereby promoting DNA uptake and transformation. Required for transformation. Required for DNA binding. This chain is Competence protein ComGC, found in Streptococcus pneumoniae (strain ATCC BAA-255 / R6).